The chain runs to 287 residues: Probable glucose uptake protein GlcU (287 aa).

Transmembrane regions (helical) follow at residues 7–29 (LIAL…VGGG), 34–56 (IRGT…FAKF), 58–75 (NPTV…WAFG), 114–136 (WSSM…GVAL), 156–178 (MGIL…IFGV), 183–202 (ALFF…SMNH), 209–228 (TALN…FMFY), 233–255 (VGVA…GGIF), and 267–286 (TGIW…LGNL).

It belongs to the GRP transporter (TC 2.A.7.5) family.

It is found in the cell membrane. Involved in the uptake of glucose. The protein is Probable glucose uptake protein GlcU (glcU) of Staphylococcus aureus (strain COL).